A 641-amino-acid chain; its full sequence is Chaperone protein HtpG (641 aa).

The a; substrate-binding stretch occupies residues 1–348; the sequence is MTTATEKQTL…SNDLSLNVSR (348 aa). Positions 349-565 are b; it reads EILQNDKAVE…AYDMGVQMRR (217 aa). A c region spans residues 566–641; it reads IMEAAGQALP…KLLLELSNAG (76 aa).

It belongs to the heat shock protein 90 family. In terms of assembly, homodimer.

Its subcellular location is the cytoplasm. Functionally, molecular chaperone. Has ATPase activity. The sequence is that of Chaperone protein HtpG from Hahella chejuensis (strain KCTC 2396).